The sequence spans 418 residues: Cell division protein FtsA (418 aa).

It belongs to the FtsA/MreB family. Self-interacts. Interacts with FtsZ.

It localises to the cell inner membrane. Its function is as follows. Cell division protein that is involved in the assembly of the Z ring. May serve as a membrane anchor for the Z ring. The polypeptide is Cell division protein FtsA (Buchnera aphidicola subsp. Acyrthosiphon pisum (strain APS) (Acyrthosiphon pisum symbiotic bacterium)).